Consider the following 226-residue polypeptide: Thymidylate kinase (226 aa).

9–16 (GPEGSGKS) is a binding site for ATP.

It belongs to the thymidylate kinase family.

It catalyses the reaction dTMP + ATP = dTDP + ADP. Phosphorylation of dTMP to form dTDP in both de novo and salvage pathways of dTTP synthesis. In Roseiflexus sp. (strain RS-1), this protein is Thymidylate kinase.